The chain runs to 189 residues: GMP synthase [glutamine-hydrolyzing] subunit A (189 aa).

In terms of domain architecture, Glutamine amidotransferase type-1 spans 1-189 (MIVILNNGGQ…CKKCGFEFEE (189 aa)). The active-site Nucleophile is the Cys-76. Residues His-163 and Glu-165 contribute to the active site.

In terms of assembly, heterodimer composed of a glutamine amidotransferase subunit (A) and a GMP-binding subunit (B).

The catalysed reaction is XMP + L-glutamine + ATP + H2O = GMP + L-glutamate + AMP + diphosphate + 2 H(+). Its pathway is purine metabolism; GMP biosynthesis; GMP from XMP (L-Gln route): step 1/1. In terms of biological role, catalyzes the synthesis of GMP from XMP. The sequence is that of GMP synthase [glutamine-hydrolyzing] subunit A from Methanococcus maripaludis (strain C7 / ATCC BAA-1331).